Reading from the N-terminus, the 119-residue chain is Large ribosomal subunit protein bL20 (119 aa).

It belongs to the bacterial ribosomal protein bL20 family.

Binds directly to 23S ribosomal RNA and is necessary for the in vitro assembly process of the 50S ribosomal subunit. It is not involved in the protein synthesizing functions of that subunit. The sequence is that of Large ribosomal subunit protein bL20 from Colwellia psychrerythraea (strain 34H / ATCC BAA-681) (Vibrio psychroerythus).